Reading from the N-terminus, the 213-residue chain is Orotate phosphoribosyltransferase (213 aa).

Position 26 (lysine 26) interacts with 5-phospho-alpha-D-ribose 1-diphosphate. 34 to 35 (FF) provides a ligand contact to orotate. 5-phospho-alpha-D-ribose 1-diphosphate-binding positions include 72–73 (YK), arginine 99, lysine 100, lysine 103, histidine 105, and 124–132 (DDVITAGTA). The orotate site is built by threonine 128 and arginine 156.

It belongs to the purine/pyrimidine phosphoribosyltransferase family. PyrE subfamily. As to quaternary structure, homodimer. Mg(2+) serves as cofactor.

The enzyme catalyses orotidine 5'-phosphate + diphosphate = orotate + 5-phospho-alpha-D-ribose 1-diphosphate. Its pathway is pyrimidine metabolism; UMP biosynthesis via de novo pathway; UMP from orotate: step 1/2. Catalyzes the transfer of a ribosyl phosphate group from 5-phosphoribose 1-diphosphate to orotate, leading to the formation of orotidine monophosphate (OMP). The polypeptide is Orotate phosphoribosyltransferase (Escherichia coli O139:H28 (strain E24377A / ETEC)).